A 613-amino-acid polypeptide reads, in one-letter code: Transcription factor MTB1 (613 aa).

The tract at residues Leu-48–Phe-130 is JAZ-interaction domain. Disordered regions lie at residues Glu-256–Asp-285 and Ala-391–Gln-441. A compositionally biased stretch (polar residues) spans Gly-260–Ala-270. 2 stretches are compositionally biased toward basic and acidic residues: residues Val-394 to Arg-417 and Asn-427 to Gln-441. A basic motif; degenerate region spans residues Glu-430–Arg-443. Positions Glu-430–Leu-479 constitute a bHLH domain. Residues Glu-444 to Leu-479 are helix-loop-helix motif. Residues Arg-490 to Gln-513 form a disordered region. The span at Gly-495 to Ile-512 shows a compositional bias: polar residues.

As to quaternary structure, interacts with MYC2 (via N-terminus). MTB1 competes with MED25 for binding to MYC2. Interacts (via N-terminus) with JAZ7.

It localises to the nucleus. Transcription factor that negatively regulates jasmonate (JA) signaling. Negatively regulates JA-dependent response to wounding, JA-induced expression of defense genes, JA-dependent responses against herbivorous insects, and JA-dependent resistance against Botrytis cinerea infection. Plays a positive role in resistance against the bacterial pathogen Pseudomonas syringae pv tomato DC3000. The protein is Transcription factor MTB1 of Solanum lycopersicum (Tomato).